Consider the following 429-residue polypeptide: Ribosomal RNA small subunit methyltransferase B (429 aa).

Residues 254 to 260 (CAAPGGK), aspartate 277, aspartate 303, and aspartate 322 each bind S-adenosyl-L-methionine. The Nucleophile role is filled by cysteine 375.

Belongs to the class I-like SAM-binding methyltransferase superfamily. RsmB/NOP family.

The protein resides in the cytoplasm. The catalysed reaction is cytidine(967) in 16S rRNA + S-adenosyl-L-methionine = 5-methylcytidine(967) in 16S rRNA + S-adenosyl-L-homocysteine + H(+). Functionally, specifically methylates the cytosine at position 967 (m5C967) of 16S rRNA. The chain is Ribosomal RNA small subunit methyltransferase B from Escherichia coli O7:K1 (strain IAI39 / ExPEC).